A 195-amino-acid chain; its full sequence is Large ribosomal subunit protein uL18 (195 aa).

The protein belongs to the universal ribosomal protein uL18 family. In terms of assembly, part of the 50S ribosomal subunit. Contacts the 5S and 23S rRNAs.

Its function is as follows. This is one of the proteins that bind and probably mediate the attachment of the 5S RNA into the large ribosomal subunit, where it forms part of the central protuberance. This Nanoarchaeum equitans (strain Kin4-M) protein is Large ribosomal subunit protein uL18.